Consider the following 130-residue polypeptide: Small ribosomal subunit protein uS11 (130 aa).

The protein belongs to the universal ribosomal protein uS11 family. As to quaternary structure, part of the 30S ribosomal subunit. Interacts with proteins S7 and S18. Binds to IF-3.

Located on the platform of the 30S subunit, it bridges several disparate RNA helices of the 16S rRNA. Forms part of the Shine-Dalgarno cleft in the 70S ribosome. In Teredinibacter turnerae (strain ATCC 39867 / T7901), this protein is Small ribosomal subunit protein uS11.